The sequence spans 94 residues: Small ribosomal subunit protein bS20 (94 aa).

The protein belongs to the bacterial ribosomal protein bS20 family.

Binds directly to 16S ribosomal RNA. The chain is Small ribosomal subunit protein bS20 from Acaryochloris marina (strain MBIC 11017).